Here is a 609-residue protein sequence, read N- to C-terminus: Myoneurin (609 aa).

In terms of domain architecture, BTB spans 24 to 89 (CDCTILIGDF…IYSGNLNYDS (66 aa)). 2 short sequence motifs (nuclear localization signal) span residues 172-188 (KKSQKIKRWKRPLRSHQ) and 257-262 (QKPAKL). 8 C2H2-type zinc fingers span residues 301–323 (PVCNTCGKVFSEASSLRRHMRIH), 329–351 (YVCHLCAKAFTQCNQLKTHVRTH), 357–380 (YQCKKCDKGFAQKCQLVFHSRMHH), 386–408 (YKCDVCNLQFATSSNLKIHARKH), 414–436 (YVCDRCGQRFAQASTLTYHVRRH), 442–464 (YVCDTCGKAFAVSSSLITHARKH), 470–492 (YICGVCRKSFISSGELNKHFRSH), and 498–521 (FVCEVCGNSYTDVKNLKKHKLKMH). The interval 528 to 553 (IEMKSAENSSSSEDSTTKSPEPESLE) is disordered. Low complexity predominate over residues 533 to 546 (AENSSSSEDSTTKS).

The protein resides in the nucleus. The protein is Myoneurin (mynn) of Xenopus laevis (African clawed frog).